The following is a 148-amino-acid chain: MRAYHPTPATKTRALWREIGLPASRGTVLVDSIKMGFSVDVIDSIHLWASIPKAEILRATGIPSRSLTRRRTHDGRFTPEESERIARFVRVMDAAVDLFGGDKGKAITWMSTPIKGLGHRSPDSLLETETGALEVCDLIGRLEHGVFS.

Belongs to the MbcA/ParS/Xre antitoxin family. Homodimer. Forms a complex with cognate toxin Rse.

In terms of biological role, antitoxin component of a type II toxin-antitoxin (TA) system. Neutralizes the activity of cognate toxin Res. The chain is Antitoxin Xre from Yersinia enterocolitica serotype O:8 / biotype 1B (strain NCTC 13174 / 8081).